Reading from the N-terminus, the 859-residue chain is Rod cGMP-specific 3',5'-cyclic phosphodiesterase subunit alpha (859 aa).

N-acetylglycine is present on Gly-2. GAF domains are found at residues 73–222 (QAEK…NLIM) and 254–431 (DIER…GWSV). A PDEase domain is found at 483–816 (EEEELAEILQ…KEWKALADEY (334 aa)). The active-site Proton donor is the His-559. His-563, His-599, Asp-600, and Asp-720 together coordinate a divalent metal cation. Residues 823 to 859 (LEEEKQKQQAAKQAASGNQPGGNPLQGAPASKSCCIQ) form a disordered region. Cys-856 carries the post-translational modification Cysteine methyl ester. Cys-856 carries S-farnesyl cysteine lipidation. Residues 857 to 859 (CIQ) constitute a propeptide, removed in mature form.

The protein belongs to the cyclic nucleotide phosphodiesterase family. Oligomer composed of two catalytic chains (alpha and beta), an inhibitory chain (gamma) and the delta chain. A divalent metal cation serves as cofactor.

The protein resides in the cell membrane. It localises to the cell projection. Its subcellular location is the cilium. The protein localises to the photoreceptor outer segment. It catalyses the reaction 3',5'-cyclic GMP + H2O = GMP + H(+). Rod-specific cGMP phosphodiesterase that catalyzes the hydrolysis of 3',5'-cyclic GMP. This protein participates in processes of transmission and amplification of the visual signal. This Mus musculus (Mouse) protein is Rod cGMP-specific 3',5'-cyclic phosphodiesterase subunit alpha.